We begin with the raw amino-acid sequence, 87 residues long: Sec-independent protein translocase protein TatA (87 aa).

Residues 1 to 21 form a helical membrane-spanning segment; that stretch reads MGGMSITHWIVVAVVVMIFFG. Residues 40–87 form a disordered region; it reads KKGMSEDDTTPPAAPPAPAPRLENQPLPPENTTQNVAQNVPNDIKNNQ. Polar residues predominate over residues 69–87; that stretch reads ENTTQNVAQNVPNDIKNNQ.

Belongs to the TatA/E family. In terms of assembly, the Tat system comprises two distinct complexes: a TatABC complex, containing multiple copies of TatA, TatB and TatC subunits, and a separate TatA complex, containing only TatA subunits. Substrates initially bind to the TatABC complex, which probably triggers association of the separate TatA complex to form the active translocon.

The protein resides in the cell inner membrane. Part of the twin-arginine translocation (Tat) system that transports large folded proteins containing a characteristic twin-arginine motif in their signal peptide across membranes. TatA could form the protein-conducting channel of the Tat system. The chain is Sec-independent protein translocase protein TatA from Zymomonas mobilis subsp. mobilis (strain ATCC 31821 / ZM4 / CP4).